Here is a 340-residue protein sequence, read N- to C-terminus: Ketol-acid reductoisomerase (NADP(+)) (340 aa).

In terms of domain architecture, KARI N-terminal Rossmann spans 3–182 (VQMEYEKDVK…GAARVGLLET (180 aa)). NADP(+) contacts are provided by residues 26–29 (YGSQ), R49, S53, and 83–86 (DEIQ). Residue H108 is part of the active site. G134 is an NADP(+) binding site. A KARI C-terminal knotted domain is found at 183-328 (TYKEETEEDL…AELRKAMPFV (146 aa)). Residues D191, E195, E227, and E231 each contribute to the Mg(2+) site. S252 is a substrate binding site.

Belongs to the ketol-acid reductoisomerase family. Mg(2+) is required as a cofactor.

The catalysed reaction is (2R)-2,3-dihydroxy-3-methylbutanoate + NADP(+) = (2S)-2-acetolactate + NADPH + H(+). The enzyme catalyses (2R,3R)-2,3-dihydroxy-3-methylpentanoate + NADP(+) = (S)-2-ethyl-2-hydroxy-3-oxobutanoate + NADPH + H(+). The protein operates within amino-acid biosynthesis; L-isoleucine biosynthesis; L-isoleucine from 2-oxobutanoate: step 2/4. Its pathway is amino-acid biosynthesis; L-valine biosynthesis; L-valine from pyruvate: step 2/4. Involved in the biosynthesis of branched-chain amino acids (BCAA). Catalyzes an alkyl-migration followed by a ketol-acid reduction of (S)-2-acetolactate (S2AL) to yield (R)-2,3-dihydroxy-isovalerate. In the isomerase reaction, S2AL is rearranged via a Mg-dependent methyl migration to produce 3-hydroxy-3-methyl-2-ketobutyrate (HMKB). In the reductase reaction, this 2-ketoacid undergoes a metal-dependent reduction by NADPH to yield (R)-2,3-dihydroxy-isovalerate. The protein is Ketol-acid reductoisomerase (NADP(+)) of Streptococcus pneumoniae (strain JJA).